The sequence spans 308 residues: Taste receptor type 2 member 10 (308 aa).

Over 1–6 (MLSVVE) the chain is Extracellular. Residues 7–27 (GIFIFVVISESVFGVLGNGFI) traverse the membrane as a helical segment. Residues 28 to 42 (GLVNCIDCAKNKLST) lie on the Cytoplasmic side of the membrane. Residues 43–63 (IGFILTGLAISRIFLIWVIIT) traverse the membrane as a helical segment. The Extracellular portion of the chain corresponds to 64–100 (DGFIQIFSPDIYASGNLIEYISYIWVIGNQSSMWFAT). Asn-92 is a glycosylation site (N-linked (GlcNAc...) asparagine). A helical membrane pass occupies residues 101 to 121 (SLSIFYFLKIANFSNYIFLWL). The Cytoplasmic portion of the chain corresponds to 122 to 126 (KSRTN). Residues 127–147 (MVLPFMMAFLLISSLLNFAHI) traverse the membrane as a helical segment. Topologically, residues 148–179 (VKILNDHKMKNDTVWHLNMYKSEYFIKQILLN) are extracellular. An N-linked (GlcNAc...) asparagine glycan is attached at Asn-158. A helical membrane pass occupies residues 180–200 (LGVIFFFTLSLITCVLLIISL). Residues 201 to 227 (WRHNRQMQSNVTGLRDSNTEAHVKAMK) lie on the Cytoplasmic side of the membrane. Residues 228 to 248 (VLISFIILFILYFIGMALEIS) form a helical membrane-spanning segment. Topologically, residues 249 to 257 (RFTVPENKL) are extracellular. A helical transmembrane segment spans residues 258 to 278 (LLMFGMTTTAIYPWGHSFILI). At 279–308 (LGNSKLKQASLRVLQQLKCCEKRKKSQSHI) the chain is on the cytoplasmic side.

It belongs to the G-protein coupled receptor T2R family.

It is found in the membrane. Receptor that may play a role in the perception of bitterness and is gustducin-linked. May play a role in sensing the chemical composition of the gastrointestinal content. The activity of this receptor may stimulate alpha gustducin, mediate PLC-beta-2 activation and lead to the gating of TRPM5. The sequence is that of Taste receptor type 2 member 10 (TAS2R10) from Pongo pygmaeus (Bornean orangutan).